A 299-amino-acid chain; its full sequence is MSSVKIECVGSDRYRLGESPVWDEKENSLLCVDITGRKVCRWDAASGQVQALSVDAPVSSVALRKSGDYVITLGTRFAALKWKEQLVTTIAQVDRDKANNRFNDGKVDPAGRYFAGTMAEEIRPAVLERRQGSLYTLCPDHSVVKHFDQVDISNGLDWSLDHKTFFYIDSLSYSVDAFDYDLQTGKIGNRRSVYKLEKEESIPDGMCIDTEGKLWVACYDGGRVIRLDPETGKRIQTVKLPVDKTTSCCFGGKDYSEMYVTSASDGMDREWLSRQPQAGGVFKITGLGVKGIPPYPFAG.

Glu-18 is a binding site for a divalent metal cation. Positions 101, 103, and 121 each coordinate substrate. Residues Asn-154 and Asp-204 each contribute to the a divalent metal cation site. The active-site Proton donor/acceptor is the Asp-204.

This sequence belongs to the SMP-30/CGR1 family. Zn(2+) serves as cofactor. Requires Mn(2+) as cofactor. Ca(2+) is required as a cofactor. The cofactor is Mg(2+).

It localises to the cytoplasm. It carries out the reaction D-glucono-1,5-lactone + H2O = D-gluconate + H(+). It participates in cofactor biosynthesis; L-ascorbate biosynthesis via UDP-alpha-D-glucuronate pathway; L-ascorbate from UDP-alpha-D-glucuronate: step 3/4. Its function is as follows. Gluconolactonase with low activity towards other sugar lactones, including gulonolactone and galactonolactone. Catalyzes a key step in ascorbic acid (vitamin C) biosynthesis. Can also hydrolyze diisopropyl phosphorofluoridate and phenylacetate (in vitro). Calcium-binding protein. Modulates Ca(2+) signaling, and Ca(2+)-dependent cellular processes and enzyme activities. This chain is Regucalcin, found in Gallus gallus (Chicken).